The chain runs to 647 residues: Nucleoside triphosphatase I (647 aa).

Residues F48–K213 enclose the Helicase ATP-binding domain. Residue W61 to T68 participates in ATP binding. The DEXH box motif lies at D150–H153. Residues Y377–K540 enclose the Helicase C-terminal domain. The binding to the cap-specific mRNA (nucleoside-2'-O-)-methyltransferase stretch occupies residues D466 to I532.

Belongs to the helicase family. NPH I subfamily. As to quaternary structure, monomer. Interacts (via C-terminus) with RAP94 (via N-terminus). Interacts with the cap-specific mRNA (nucleoside-2'-O-)-methyltransferase.

Its subcellular location is the virion. It carries out the reaction a ribonucleoside 5'-triphosphate + H2O = a ribonucleoside 5'-diphosphate + phosphate + H(+). Its function is as follows. DNA-dependent ATPase required for providing the needed energy to achieve the termination of early transcripts. Acts in concert with the RAP94 subunit of the virion RNA polymerase and the capping enzyme/VTF to catalyze release of UUUUUNU-containing nascent RNA from the elongation complex. NPH-I must bind ssDNA in order to exhibit ATPase activity. The sequence is that of Nucleoside triphosphatase I (NPH1) from Melanoplus sanguinipes entomopoxvirus (MsEPV).